Reading from the N-terminus, the 397-residue chain is Ornithine aminotransferase (397 aa).

The residue at position 255 (Lys-255) is an N6-(pyridoxal phosphate)lysine.

Belongs to the class-III pyridoxal-phosphate-dependent aminotransferase family. OAT subfamily. Pyridoxal 5'-phosphate is required as a cofactor.

Its subcellular location is the cytoplasm. The catalysed reaction is a 2-oxocarboxylate + L-ornithine = L-glutamate 5-semialdehyde + an L-alpha-amino acid. It participates in amino-acid biosynthesis; L-proline biosynthesis; L-glutamate 5-semialdehyde from L-ornithine: step 1/1. Its function is as follows. Catalyzes the interconversion of ornithine to glutamate semialdehyde. In Macrococcus caseolyticus (strain JCSC5402) (Macrococcoides caseolyticum), this protein is Ornithine aminotransferase.